The chain runs to 1338 residues: Thioester-containing protein 1 allele R1 (1338 aa).

The signal sequence occupies residues 1 to 21 (MWQFIRSRILTVIIFIGAAHG). N-linked (GlcNAc...) asparagine glycans are attached at residues Asn-68, Asn-199, Asn-242, Asn-312, and Asn-481. The tract at residues 580-609 (ENEFDIFHSLGLFARTLDDILFDSANEKTG) is may contain the cleavage site. Residues Asn-637, Asn-728, and Asn-813 are each glycosylated (N-linked (GlcNAc...) asparagine). The segment at residues 859–862 (CGEQ) is a cross-link (isoglutamyl cysteine thioester (Cys-Gln)). N-linked (GlcNAc...) asparagine glycosylation is found at Asn-919 and Asn-1065. Disulfide bonds link Cys-1217–Cys-1283, Cys-1326–Cys-1338, and Cys-1329–Cys-1334.

Heterodimer of a TEP1-N chain and an TEP1-C chain non-covalently linked. Forms a complex composed of TEP1-N and TEP1-C heterodimer, LRIM1 and APL1C; the interaction stabilizes TEP1-N and TEP1-C heterodimer, prevents its binding to tissues while circulating in the hemolymph and protects the thioester bond from hydrolysis. Mature TEP1 and to a lesser extent full-length TEP1 interact with SPCLIP1; the interaction is induced by microbial infection. In the hemolymph, the full-length protein is cleaved by an unknow protease into a 75kDa N-terminal (TEP1-N) chain and an 80kDa C-terminal (TEP1-C) chain which remain non-covalently linked. The TEP1-C chain contains the thioester bond which covalently binds to the pathogen surface. Cleavage is induced by bacterial infection or aseptic wound injury. During embryonic and pupal development, the cleaved form is the predominant form. In terms of processing, N-glycosylated.

Its subcellular location is the secreted. Functionally, plays an essential role in the innate immune response against bacteria, fungi and protozoa infection. After proteolytic cleavage, the protein C-terminus binds covalently through a thioester bond to the pathogen surface resulting in pathogen clearance either by melanization or lysis. Initiate the recruitment and activation of a cascade of proteases, mostly of CLIP-domain serine proteases, which leads to the proteolytic cleavage of the prophenoloxidase (PPO) into active phenoloxidase (PO), the rate-limiting enzyme in melanin biosynthesis. In response to parasite P.berghei-mediated infection, binds to and mediates killing of ookinetes, as they egress from midgut epithelial cells into the basal labyrinth, by both lysis and melanization. During bacterial infection, binds to both Gram-positive and Gram-negative bacteria but only promotes phagocytosis of Gram-negative bacteria. Promotes the accumulation of SPCLIP1 onto the surface of P.berghei ookinetes and bacterium E.coli which leads to the melanization of the pathogen. Recruits CLIPA2 to bacteria surface. In response to bacterial infection, required for periostial hemocyte aggregation, but not for the aggregation of sessile hemocytes in non-periostial regions. During the late stage of fungus B.bassiana-mediated infection, required for the initiation of hyphae melanization by binding to the surface of hyphae and recruiting prophenoloxidase PPO to them. Plays a role in male fertility by binding to defective sperm cells and promoting their removal during spermatogenesis. Binds to and mediates killing of parasite P.bergei ookinetes by lysis and melanization. Its function is as follows. Binds covalently through a thioester bond to the pathogen surface resulting in pathogen clearance. In Anopheles gambiae (African malaria mosquito), this protein is Thioester-containing protein 1 allele R1.